The following is a 1563-amino-acid chain: Integrator complex subunit 5-like protein (1563 aa).

2 stretches are compositionally biased toward basic and acidic residues: residues 1 to 21 (MKEE…RNDN) and 31 to 44 (EDWR…KNEN). Disordered regions lie at residues 1–63 (MKEE…YDDD), 102–208 (KKSK…NITY), and 270–310 (NSLN…QQNP). The segment covering 52–63 (GDSDDDDYYDDD) has biased composition (acidic residues). Composition is skewed to low complexity over residues 109–133 (TAAT…TATA) and 141–202 (NNLL…NNNN). Residues 350 to 370 (DSIINWSLSTLTIITRLLIIL) traverse the membrane as a helical segment. The span at 381–398 (QQQQQQQQQQQQQQQQQQ) shows a compositional bias: low complexity. 4 disordered regions span residues 381–417 (QQQQ…RQPI), 466–498 (SKSS…SSKT), 637–694 (FDNN…DNSS), and 784–828 (ILNN…SQEI). A compositionally biased stretch (pro residues) spans 405-414 (FPPPPPPPLR). Composition is skewed to low complexity over residues 468-496 (SSSS…SSSS), 639-686 (NNNN…NNNN), and 786-824 (NNNN…QQQQ). Residues 877 to 897 (IIIKLISLIGMDSIYSSLIIL) traverse the membrane as a helical segment. Disordered stretches follow at residues 1154–1173 (SGNF…DEYG) and 1268–1303 (KQRM…DQNE). Residues 1160 to 1172 (GDDDDDEYGDDEY) show a composition bias toward acidic residues. Low complexity predominate over residues 1277–1288 (SIQQNGNINNEQ). Residues 1289 to 1303 (QQEEDDNDDADDQNE) show a composition bias toward acidic residues.

It belongs to the Integrator subunit 5 family. Component of the Integrator complex. The core complex associates with protein phosphatase 2A subunits, to form the Integrator-PP2A (INTAC) complex.

The protein localises to the nucleus. It is found in the cytoplasm. It localises to the nucleus membrane. Its function is as follows. Component of the integrator complex, a multiprotein complex that terminates RNA polymerase II (Pol II) transcription in the promoter-proximal region of genes. The integrator complex provides a quality checkpoint during transcription elongation by driving premature transcription termination of transcripts that are unfavorably configured for transcriptional elongation: the complex terminates transcription by (1) catalyzing dephosphorylation of the C-terminal domain (CTD) of Pol II subunit polr2a, (2) degrading the exiting nascent RNA transcript via endonuclease activity and (3) promoting the release of Pol II from bound DNA. The integrator complex is also involved in terminating the synthesis of non-coding Pol II transcripts, such as enhancer RNAs (eRNAs), small nuclear RNAs (snRNAs), telomerase RNAs and long non-coding RNAs (lncRNAs). The polypeptide is Integrator complex subunit 5-like protein (Dictyostelium discoideum (Social amoeba)).